We begin with the raw amino-acid sequence, 1357 residues long: DNA-directed RNA polymerase subunit beta (1357 aa).

Belongs to the RNA polymerase beta chain family. In terms of assembly, the RNAP catalytic core consists of 2 alpha, 1 beta, 1 beta' and 1 omega subunit. When a sigma factor is associated with the core the holoenzyme is formed, which can initiate transcription.

The enzyme catalyses RNA(n) + a ribonucleoside 5'-triphosphate = RNA(n+1) + diphosphate. Its function is as follows. DNA-dependent RNA polymerase catalyzes the transcription of DNA into RNA using the four ribonucleoside triphosphates as substrates. The protein is DNA-directed RNA polymerase subunit beta of Pseudomonas putida (Arthrobacter siderocapsulatus).